Consider the following 615-residue polypeptide: Protein DBF4 homolog B (615 aa).

The BRCT domain maps to 43–133 (ARKHPFSGKS…DPKGSHPRPS (91 aa)). Disordered stretches follow at residues 93–141 (REVK…DSVP) and 264–293 (FEAP…AHTM). Basic and acidic residues predominate over residues 275 to 284 (HTRESKDGEP). The DBF4-type zinc finger occupies 294–343 (PRRKKGYCECCQEAFEELHVHLQSAQHRSFALEAHLYAEVDRIIAQLSHS). Positions 301, 304, 314, and 320 each coordinate Zn(2+). The tract at residues 371-407 (TLHPHQPSHPRAASPRIRKEDSCQASVTQGRAAGQQR) is disordered.

Forms a complex with CDC7. Note that CDC7 forms distinct complex either with DBF4/DBF4A or DBF4B. Such complexes are stable upon replication stress. Post-translationally, phosphorylated. In terms of tissue distribution, widely expressed. Highly expressed in testis.

Its subcellular location is the nucleus. Regulatory subunit for CDC7 which activates its kinase activity thereby playing a central role in DNA replication and cell proliferation. Required for progression of S and M phases. The complex CDC7-DBF4B selectively phosphorylates MCM2 subunit at 'Ser-40' and then is involved in regulating the initiation of DNA replication during cell cycle. The protein is Protein DBF4 homolog B (DBF4B) of Homo sapiens (Human).